Consider the following 640-residue polypeptide: Threonine--tRNA ligase (640 aa).

Residues 1-61 (MPIITLPDGS…ERDATLQIIT (61 aa)) enclose the TGS domain. Residues 242-533 (DHRRIGKQLD…LIEHYAGAFP (292 aa)) are catalytic. Residues C333, H384, and H510 each contribute to the Zn(2+) site.

The protein belongs to the class-II aminoacyl-tRNA synthetase family. As to quaternary structure, homodimer. It depends on Zn(2+) as a cofactor.

Its subcellular location is the cytoplasm. The catalysed reaction is tRNA(Thr) + L-threonine + ATP = L-threonyl-tRNA(Thr) + AMP + diphosphate + H(+). Functionally, catalyzes the attachment of threonine to tRNA(Thr) in a two-step reaction: L-threonine is first activated by ATP to form Thr-AMP and then transferred to the acceptor end of tRNA(Thr). Also edits incorrectly charged L-seryl-tRNA(Thr). This Pseudomonas paraeruginosa (strain DSM 24068 / PA7) (Pseudomonas aeruginosa (strain PA7)) protein is Threonine--tRNA ligase.